A 174-amino-acid polypeptide reads, in one-letter code: Co-chaperone protein HscB homolog (174 aa).

A J domain is found at 2 to 74; sequence NYFELFKFSP…IRRAEHMLSL (73 aa).

Belongs to the HscB family. In terms of assembly, interacts with HscA and stimulates its ATPase activity.

In terms of biological role, co-chaperone involved in the maturation of iron-sulfur cluster-containing proteins. Seems to help targeting proteins to be folded toward HscA. The polypeptide is Co-chaperone protein HscB homolog (Shewanella baltica (strain OS155 / ATCC BAA-1091)).